Consider the following 120-residue polypeptide: Myohemerythrin (120 aa).

His26, His56, Glu60, His75, His79, His108, and Asp113 together coordinate Fe cation.

The protein belongs to the hemerythrin family. As to quaternary structure, monomer.

It is found in the cytoplasm. Its function is as follows. Myohemerythrin is an oxygen-binding protein found in the retractor muscles of certain worms. The oxygen-binding site contains two iron atoms. In Theromyzon tessulatum (Duck leech), this protein is Myohemerythrin.